Reading from the N-terminus, the 965-residue chain is Glycine dehydrogenase (decarboxylating) (965 aa).

Lysine 711 is modified (N6-(pyridoxal phosphate)lysine).

This sequence belongs to the GcvP family. In terms of assembly, the glycine cleavage system is composed of four proteins: P, T, L and H. Pyridoxal 5'-phosphate is required as a cofactor.

It catalyses the reaction N(6)-[(R)-lipoyl]-L-lysyl-[glycine-cleavage complex H protein] + glycine + H(+) = N(6)-[(R)-S(8)-aminomethyldihydrolipoyl]-L-lysyl-[glycine-cleavage complex H protein] + CO2. Functionally, the glycine cleavage system catalyzes the degradation of glycine. The P protein binds the alpha-amino group of glycine through its pyridoxal phosphate cofactor; CO(2) is released and the remaining methylamine moiety is then transferred to the lipoamide cofactor of the H protein. This Psychrobacter arcticus (strain DSM 17307 / VKM B-2377 / 273-4) protein is Glycine dehydrogenase (decarboxylating).